The primary structure comprises 277 residues: MAVVTMKQLLDSGTHFGHQTRRWNPKMKRFIFTDRNGIYIIDLQQTLTFIDKAYEFVKETVARGGLVLFVGTKKQAQESVAAEATRVGMPYVNQRWLGGMLTNFSTVHKRLQRLKELEAMEQTGGFEGRTKKEILGLTREKNKLERSLGGIRDMAKVPSAIWVVDTNKEHIAVGEARKLGVPVIAILDTNCDPDEVDYPIPGNDDAIRSAELLTTVIASAVAEGLQVRAGLRCGDGKPETEAVEPLPEWEQELLAGAGSSALNDSGADLSEANPTEA.

A disordered region spans residues 254 to 277 (LAGAGSSALNDSGADLSEANPTEA).

The protein belongs to the universal ribosomal protein uS2 family.

The protein is Small ribosomal subunit protein uS2 (rpsB) of Mycobacterium leprae (strain TN).